Reading from the N-terminus, the 275-residue chain is Nitrogenase iron protein 2 (275 aa).

An ATP-binding site is contributed by G9–S16. Residue C97 coordinates [4Fe-4S] cluster. ADP-ribosylarginine; by dinitrogenase reductase ADP-ribosyltransferase is present on R100. C132 contributes to the [4Fe-4S] cluster binding site.

Belongs to the NifH/BchL/ChlL family. As to quaternary structure, homodimer. [4Fe-4S] cluster serves as cofactor. The reversible ADP-ribosylation of Arg-100 inactivates the nitrogenase reductase and regulates nitrogenase activity.

The catalysed reaction is N2 + 8 reduced [2Fe-2S]-[ferredoxin] + 16 ATP + 16 H2O = H2 + 8 oxidized [2Fe-2S]-[ferredoxin] + 2 NH4(+) + 16 ADP + 16 phosphate + 6 H(+). In terms of biological role, the key enzymatic reactions in nitrogen fixation are catalyzed by the nitrogenase complex, which has 2 components: the iron protein (component 2) and a component 1 which is either a molybdenum-iron protein, a vanadium-iron, or an iron-iron protein. The protein is Nitrogenase iron protein 2 (anfH) of Rhodobacter capsulatus (Rhodopseudomonas capsulata).